The primary structure comprises 138 residues: Small ribosomal subunit protein uS12 (138 aa).

At Asp89 the chain carries 3-methylthioaspartic acid. The segment at 101 to 138 is disordered; it reads ALDTAGTQNRNQGRSKYGTKRPKKGAATAAKGPVKGKK. A compositionally biased stretch (polar residues) spans 105 to 114; sequence AGTQNRNQGR. Residues 125–138 show a composition bias toward low complexity; it reads GAATAAKGPVKGKK.

Belongs to the universal ribosomal protein uS12 family. Part of the 30S ribosomal subunit. Contacts proteins S8 and S17. May interact with IF1 in the 30S initiation complex.

In terms of biological role, with S4 and S5 plays an important role in translational accuracy. Its function is as follows. Interacts with and stabilizes bases of the 16S rRNA that are involved in tRNA selection in the A site and with the mRNA backbone. Located at the interface of the 30S and 50S subunits, it traverses the body of the 30S subunit contacting proteins on the other side and probably holding the rRNA structure together. The combined cluster of proteins S8, S12 and S17 appears to hold together the shoulder and platform of the 30S subunit. The polypeptide is Small ribosomal subunit protein uS12 (Heliobacterium modesticaldum (strain ATCC 51547 / Ice1)).